A 440-amino-acid chain; its full sequence is Thymidine phosphorylase (440 aa).

Belongs to the thymidine/pyrimidine-nucleoside phosphorylase family. In terms of assembly, homodimer.

It carries out the reaction thymidine + phosphate = 2-deoxy-alpha-D-ribose 1-phosphate + thymine. Its pathway is pyrimidine metabolism; dTMP biosynthesis via salvage pathway; dTMP from thymine: step 1/2. Its function is as follows. The enzymes which catalyze the reversible phosphorolysis of pyrimidine nucleosides are involved in the degradation of these compounds and in their utilization as carbon and energy sources, or in the rescue of pyrimidine bases for nucleotide synthesis. The polypeptide is Thymidine phosphorylase (Burkholderia pseudomallei (strain K96243)).